The chain runs to 407 residues: Imidazolonepropionase (407 aa).

The Fe(3+) site is built by H74 and H76. The Zn(2+) site is built by H74 and H76. R83, Y146, and H179 together coordinate 4-imidazolone-5-propanoate. Y146 provides a ligand contact to N-formimidoyl-L-glutamate. Residue H244 participates in Fe(3+) binding. H244 serves as a coordination point for Zn(2+). Residue Q247 participates in 4-imidazolone-5-propanoate binding. Fe(3+) is bound at residue D319. D319 provides a ligand contact to Zn(2+). N-formimidoyl-L-glutamate-binding residues include N321 and G323. T324 provides a ligand contact to 4-imidazolone-5-propanoate.

The protein belongs to the metallo-dependent hydrolases superfamily. HutI family. It depends on Zn(2+) as a cofactor. Requires Fe(3+) as cofactor.

It is found in the cytoplasm. The enzyme catalyses 4-imidazolone-5-propanoate + H2O = N-formimidoyl-L-glutamate. The protein operates within amino-acid degradation; L-histidine degradation into L-glutamate; N-formimidoyl-L-glutamate from L-histidine: step 3/3. In terms of biological role, catalyzes the hydrolytic cleavage of the carbon-nitrogen bond in imidazolone-5-propanoate to yield N-formimidoyl-L-glutamate. It is the third step in the universal histidine degradation pathway. This Salmonella arizonae (strain ATCC BAA-731 / CDC346-86 / RSK2980) protein is Imidazolonepropionase.